The chain runs to 318 residues: Cephalosporin-C deacetylase (318 aa).

A substrate-binding site is contributed by tyrosine 91. Catalysis depends on serine 181, which acts as the Nucleophile. Catalysis depends on charge relay system residues aspartate 269 and histidine 298.

Belongs to the carbohydrate esterase 7 family. Homohexamer.

Its subcellular location is the cytoplasm. It catalyses the reaction Deacetylation of xylans and xylo-oligosaccharides.. The enzyme catalyses cephalosporin C + H2O = deacetylcephalosporin C + acetate + H(+). Functionally, esterase that removed acetyl groups from a number of O-acetylated small substrates, such as acetylated xylose, short xylooligosaccharides and cephalosporin C. Has no activity towards polymeric acetylated xylan. Cannot cleave amide linkages. This is Cephalosporin-C deacetylase (cah) from Bacillus subtilis (strain 168).